Reading from the N-terminus, the 222-residue chain is 2-C-methyl-D-erythritol 2,4-cyclodiphosphate synthase, chloroplastic (222 aa).

The N-terminal 43 residues, 1–43 (MATASSLFLASPVATAPTARARSTPSASPARPSLRLRRPSTLA), are a transit peptide targeting the chloroplast. A divalent metal cation contacts are provided by Asp-73 and His-75. Residues 73–75 (DLH), 99–100 (HS), 103–111 (DVLLHCVVD), 121–123 (DIG), 126–130 (FPDSD), Asp-130, 165–171 (LQKPKIS), and 196–200 (AKTHE) each bind substrate. Position 107 (His-107) interacts with a divalent metal cation.

It belongs to the IspF family. In terms of assembly, homotrimer. The cofactor is a divalent metal cation. In terms of tissue distribution, expressed in roots, leaves, stems, leaf sheaths and young panicles.

It is found in the plastid. The protein resides in the chloroplast. It carries out the reaction 4-CDP-2-C-methyl-D-erythritol 2-phosphate = 2-C-methyl-D-erythritol 2,4-cyclic diphosphate + CMP. It participates in isoprenoid biosynthesis; isopentenyl diphosphate biosynthesis via DXP pathway; isopentenyl diphosphate from 1-deoxy-D-xylulose 5-phosphate: step 4/6. Enzyme of the plastid non-mevalonate pathway for isoprenoid biosynthesis that converts 4-diphosphocytidyl-2C-methyl-D-erythritol 2-phosphate into 2C-methyl-D-erythritol 2,4-cyclodiphosphate and CMP. Is essential for chloroplast development. This chain is 2-C-methyl-D-erythritol 2,4-cyclodiphosphate synthase, chloroplastic, found in Oryza sativa subsp. japonica (Rice).